Reading from the N-terminus, the 92-residue chain is Putative phosphotransferase enzyme IIB component BB_0367 (92 aa).

Residues 10-92 (IKVAEHIVEC…ILYMMNEQKQ (83 aa)) form the PTS EIIB type-1 domain.

It is found in the cytoplasm. Its function is as follows. The phosphoenolpyruvate-dependent sugar phosphotransferase system (PTS), a major carbohydrate active -transport system, catalyzes the phosphorylation of incoming sugar substrates concomitant with their translocation across the cell membrane. This Borreliella burgdorferi (strain ATCC 35210 / DSM 4680 / CIP 102532 / B31) (Borrelia burgdorferi) protein is Putative phosphotransferase enzyme IIB component BB_0367.